Here is a 561-residue protein sequence, read N- to C-terminus: MDEDSVHGDSHLKTCVVLGGRGFIGRSLVSRLLRLGNWTVRVADSGHTLHLDESDSLLEDALSSGRASYHCVDVRDKPQIVKVTEGSYVVFYMGATDLRSHDYFDCYKVIVQGTRNVISACRESGVRKLIYNSTADVVFDGSQPIRDGDESLRRPLKFQSMLTDFKAQAEALIKLANNRDGLLTCALRSSIVFGPGDTEFVPFLVNLAKSGYAKFILGSGENISDFTYSENVSHAHICAVKALDSQMEFVAGKEFFITNLKPVRFWDFVSHIVEGLGYPRPSIKLPVRLVLYVFSLLKWTHEKEGLGSNYDTAHQYALLASSTRTFNCNAAKKHLGYTPVVTLEDGIASTLQWFSRDLEKSDDTIIQSTADQLLGCGKVADILLWRNEKKTFVSFLVLNLFYYWFFFSGNTFTSSAAQLLFIFAVALYGVSFVPSKIFGFQVNKIPPWRFEISESAVRDLSSDIVVVWNQGVRSFKSLSSGGDWIKFFKIAGSLYLLKLIVSRSLAAFLFTVMSFSFTGFFIYEQYELELYHLARIFVECLTFIKRMVIPVSDASSKPMFM.

Residue Lys166 participates in NAD(+) binding. Positions 379–561 (VADILLWRNE…SDASSKPMFM (183 aa)) constitute a Reticulon domain. 3 helical membrane-spanning segments follow: residues 392–412 (FVSFLVLNLFYYWFFFSGNTF), 420–440 (LFIFAVALYGVSFVPSKIFGF), and 504–524 (SLAAFLFTVMSFSFTGFFIYE).

It belongs to the 3-beta-HSD family.

The protein resides in the endoplasmic reticulum membrane. It catalyses the reaction a 3beta-hydroxysteroid-4alpha-carboxylate + NADP(+) = a 3-oxosteroid + CO2 + NADPH. It carries out the reaction a 3beta-hydroxysteroid-4alpha-carboxylate + NAD(+) = a 3-oxosteroid + CO2 + NADH. It functions in the pathway steroid biosynthesis; zymosterol biosynthesis; zymosterol from lanosterol: step 4/6. This is 3beta-hydroxysteroid-dehydrogenase/decarboxylase isoform 3 (3BETAHSD/D3) from Arabidopsis thaliana (Mouse-ear cress).